The primary structure comprises 89 residues: Sec-independent protein translocase protein TatA (89 aa).

A helical membrane pass occupies residues 1 to 21 (MGGISIWQLLIIAVIVVLLFG). Positions 65–89 (ADKQADTNQEQAKTEDAKRHDKEQV) are disordered. Residues 76–89 (AKTEDAKRHDKEQV) are compositionally biased toward basic and acidic residues.

The protein belongs to the TatA/E family. In terms of assembly, the Tat system comprises two distinct complexes: a TatABC complex, containing multiple copies of TatA, TatB and TatC subunits, and a separate TatA complex, containing only TatA subunits. Substrates initially bind to the TatABC complex, which probably triggers association of the separate TatA complex to form the active translocon.

Its subcellular location is the cell inner membrane. Part of the twin-arginine translocation (Tat) system that transports large folded proteins containing a characteristic twin-arginine motif in their signal peptide across membranes. TatA could form the protein-conducting channel of the Tat system. This chain is Sec-independent protein translocase protein TatA, found in Shigella flexneri.